Consider the following 308-residue polypeptide: Ornithine carbamoyltransferase (308 aa).

Residues 56–59 (STRT), Gln83, Arg107, and 134–137 (HPCQ) contribute to the carbamoyl phosphate site. L-ornithine contacts are provided by residues Asn165, Asp225, and 229–230 (SM). Carbamoyl phosphate contacts are provided by residues 266–267 (CL) and Arg294.

This sequence belongs to the aspartate/ornithine carbamoyltransferase superfamily. OTCase family.

It is found in the cytoplasm. It carries out the reaction carbamoyl phosphate + L-ornithine = L-citrulline + phosphate + H(+). It functions in the pathway amino-acid degradation; L-arginine degradation via ADI pathway; carbamoyl phosphate from L-arginine: step 2/2. Reversibly catalyzes the transfer of the carbamoyl group from carbamoyl phosphate (CP) to the N(epsilon) atom of ornithine (ORN) to produce L-citrulline. The sequence is that of Ornithine carbamoyltransferase from Cereibacter sphaeroides (strain KD131 / KCTC 12085) (Rhodobacter sphaeroides).